Consider the following 310-residue polypeptide: Malate dehydrogenase (310 aa).

Residues 7–12 and Asp-32 contribute to the NAD(+) site; that span reads GAGNVG. Positions 81 and 87 each coordinate substrate. NAD(+)-binding positions include Asn-94 and 117-119; that span reads VSN. 2 residues coordinate substrate: Asn-119 and Arg-150. Residue His-174 is the Proton acceptor of the active site.

Belongs to the LDH/MDH superfamily. MDH type 3 family.

The enzyme catalyses (S)-malate + NAD(+) = oxaloacetate + NADH + H(+). Its function is as follows. Catalyzes the reversible oxidation of malate to oxaloacetate. The protein is Malate dehydrogenase of Chloroherpeton thalassium (strain ATCC 35110 / GB-78).